Here is a 108-residue protein sequence, read N- to C-terminus: CRISPR-associated endoribonuclease Cas2 (108 aa).

A Mg(2+)-binding site is contributed by Asp-15.

It belongs to the CRISPR-associated endoribonuclease Cas2 protein family. In terms of assembly, homodimer, forms a heterotetramer with a Cas1 homodimer. It depends on Mg(2+) as a cofactor.

In terms of biological role, CRISPR (clustered regularly interspaced short palindromic repeat), is an adaptive immune system that provides protection against mobile genetic elements (viruses, transposable elements and conjugative plasmids). CRISPR clusters contain sequences complementary to antecedent mobile elements and target invading nucleic acids. CRISPR clusters are transcribed and processed into CRISPR RNA (crRNA). Functions as a ssRNA-specific endoribonuclease. Involved in the integration of spacer DNA into the CRISPR cassette. The sequence is that of CRISPR-associated endoribonuclease Cas2 from Paracidovorax avenae (strain ATCC 19860 / DSM 7227 / CCUG 15838 / JCM 20985 / LMG 2117 / NCPPB 1011) (Acidovorax avenae).